The primary structure comprises 354 residues: Rhodopsin (354 aa).

The Extracellular portion of the chain corresponds to 1 to 36 (MNGTEGPNFYVPMSNKTGVVRSPFDYPQYYLAEPWQ). N-linked (GlcNAc...) asparagine glycosylation is found at Asn-2 and Asn-15. A helical transmembrane segment spans residues 37 to 61 (YSALAAYMFLLILLGLPINFMTLFV). The Cytoplasmic portion of the chain corresponds to 62 to 73 (TIQHKKLRTPLN). Residues 74-96 (YILLNLVFANHFMVLCGFTVTMY) traverse the membrane as a helical segment. The Extracellular segment spans residues 97–110 (TSMHGYFIFGPTGC). Cysteines 110 and 187 form a disulfide. A helical membrane pass occupies residues 111 to 133 (YIEGFFATLGGEVALWSLVVLAV). The 'Ionic lock' involved in activated form stabilization signature appears at 134–136 (ERY). The Cytoplasmic segment spans residues 134–152 (ERYIVVCKPMANFRFGENH). The helical transmembrane segment at 153–173 (AIMGVAFTWIMALSCAAPPLF) threads the bilayer. Topologically, residues 174-202 (GWSRYIPEGMQCSCGVDYYTLKPEVNNES) are extracellular. A helical transmembrane segment spans residues 203 to 224 (FVIYMFIVHFTIPLIVIFFCYG). At 225–252 (RLLCTVKEAAAQQQESLTTQKAEKEVTR) the chain is on the cytoplasmic side. A helical membrane pass occupies residues 253-274 (MVVIMVVFFLICWVPYAYVAFY). Over 275–286 (IFTHQGSNFGPV) the chain is Extracellular. Residues 287 to 308 (FMTVPAFFAKSSAIYNPVIYIV) form a helical membrane-spanning segment. The residue at position 296 (Lys-296) is an N6-(retinylidene)lysine. The Cytoplasmic segment spans residues 309-354 (LNKQFRNCLITTLCCGKNPFGDEDGSSAATSKTEASSVSSSQVSPA). 2 S-palmitoyl cysteine lipidation sites follow: Cys-322 and Cys-323. A disordered region spans residues 331–354 (EDGSSAATSKTEASSVSSSQVSPA). The span at 334–354 (SSAATSKTEASSVSSSQVSPA) shows a compositional bias: low complexity.

Belongs to the G-protein coupled receptor 1 family. Opsin subfamily. Post-translationally, contains one covalently linked retinal chromophore. Upon light absorption, the covalently bound 11-cis-retinal is converted to all-trans-retinal. After hydrolysis of the Schiff base and release of the covalently bound all-trans-retinal, active rhodopsin is regenerated by binding of a fresh molecule of 11-cis-retinal.

Its subcellular location is the membrane. The protein localises to the cell projection. It is found in the cilium. It localises to the photoreceptor outer segment. Photoreceptor required for image-forming vision at low light intensity. Required for photoreceptor cell viability after birth. Light-induced isomerization of 11-cis to all-trans retinal triggers a conformational change that activates signaling via G-proteins. Subsequent receptor phosphorylation mediates displacement of the bound G-protein alpha subunit by arrestin and terminates signaling. This is Rhodopsin (rho) from Xenopus laevis (African clawed frog).